The sequence spans 56 residues: Ovomucoid (56 aa).

One can recognise a Kazal-like domain in the interval 6–56 (VDCSEYPKPACTLEYVPICGSDNKTYGNKCNFCNAVVESNGTLTLSHFGKC). Disulfide bonds link Cys-8–Cys-38, Cys-16–Cys-35, and Cys-24–Cys-56. N-linked (GlcNAc...) asparagine glycosylation occurs at Asn-45.

It is found in the secreted. This chain is Ovomucoid, found in Cyrtonyx montezumae (Montezuma quail).